Reading from the N-terminus, the 601-residue chain is Glutamine--fructose-6-phosphate aminotransferase [isomerizing] (601 aa).

C2 acts as the Nucleophile; for GATase activity in catalysis. The Glutamine amidotransferase type-2 domain occupies 2 to 218 (CGIVGYIGYD…DHEIVIVKKD (217 aa)). 2 consecutive SIS domains span residues 284–423 (IIND…EHGR) and 453–591 (IATD…VDKP). K596 serves as the catalytic For Fru-6P isomerization activity.

In terms of assembly, homodimer.

The protein resides in the cytoplasm. It catalyses the reaction D-fructose 6-phosphate + L-glutamine = D-glucosamine 6-phosphate + L-glutamate. Its function is as follows. Catalyzes the first step in hexosamine metabolism, converting fructose-6P into glucosamine-6P using glutamine as a nitrogen source. The polypeptide is Glutamine--fructose-6-phosphate aminotransferase [isomerizing] (Staphylococcus aureus (strain Mu50 / ATCC 700699)).